The chain runs to 343 residues: UDP-N-acetylglucosamine--N-acetylmuramyl-(pentapeptide) pyrophosphoryl-undecaprenol N-acetylglucosamine transferase (343 aa).

UDP-N-acetyl-alpha-D-glucosamine contacts are provided by residues 10-12 (TGG), Asn-113, Ser-174, and Gln-275.

It belongs to the glycosyltransferase 28 family. MurG subfamily.

It localises to the cell membrane. The enzyme catalyses di-trans,octa-cis-undecaprenyl diphospho-N-acetyl-alpha-D-muramoyl-L-alanyl-D-glutamyl-meso-2,6-diaminopimeloyl-D-alanyl-D-alanine + UDP-N-acetyl-alpha-D-glucosamine = di-trans,octa-cis-undecaprenyl diphospho-[N-acetyl-alpha-D-glucosaminyl-(1-&gt;4)]-N-acetyl-alpha-D-muramoyl-L-alanyl-D-glutamyl-meso-2,6-diaminopimeloyl-D-alanyl-D-alanine + UDP + H(+). Its pathway is cell wall biogenesis; peptidoglycan biosynthesis. In terms of biological role, cell wall formation. Catalyzes the transfer of a GlcNAc subunit on undecaprenyl-pyrophosphoryl-MurNAc-pentapeptide (lipid intermediate I) to form undecaprenyl-pyrophosphoryl-MurNAc-(pentapeptide)GlcNAc (lipid intermediate II). The polypeptide is UDP-N-acetylglucosamine--N-acetylmuramyl-(pentapeptide) pyrophosphoryl-undecaprenol N-acetylglucosamine transferase (Wolbachia sp. subsp. Brugia malayi (strain TRS)).